A 477-amino-acid chain; its full sequence is MSDDRFAEDEIIQQRRKRRLEILKKYQQTGNGHSDLSIPEKKLKEDVDQVSTTKPIEAVPKMKTNASKIEINKEGSNSNTKLDVTNSTTSDSPSIKSSVQIEDTEDDMFADSPSPSVKRQNTGKGISTLTRSFADMQDNWDDIEGYYKVVLMEELDSRYIVQSNLGKGMFSTVVSALDRNRNQTFAIKIIRNNEVMYKEGLKEVSILERLQAADREGKQHIIHYERHFMHKNHLCMVFEMLSLNLRDILKKFGRNVGLSIKAVRLYAYQMFMALDLLKQCNVIHSDIKPDNMLVNEKRNILKICDLGSASDASENEITPYLVSRFYRAPEIILGFPYSCPIDTWSVGCSLYELYTGQILFPGRTNNQMLRYMMECKGKFSHKMLKRSQFLNDHFDADFNFIQIDHDPITNQETRKPVKFSKPTKDIRSRLKEVPTSTDEEFIIRQELMDLLEKCLELNPEKRVPPEVALKHPFFIKK.

The interval 25–123 (KYQQTGNGHS…SPSVKRQNTG (99 aa)) is disordered. Over residues 38-47 (IPEKKLKEDV) the composition is skewed to basic and acidic residues. Polar residues predominate over residues 74–86 (EGSNSNTKLDVTN). Over residues 87 to 98 (STTSDSPSIKSS) the composition is skewed to low complexity. At Ser-92 the chain carries Phosphoserine. Positions 113–123 (PSPSVKRQNTG) are enriched in polar residues. Positions 159-477 (YIVQSNLGKG…ALKHPFFIKK (319 aa)) constitute a Protein kinase domain. ATP-binding positions include 165–173 (LGKGMFSTV) and Lys-188. Asp-286 (proton acceptor) is an active-site residue. The residue at position 320 (Tyr-320) is a Phosphotyrosine.

The protein belongs to the protein kinase superfamily. CMGC Ser/Thr protein kinase family.

It catalyses the reaction L-seryl-[protein] + ATP = O-phospho-L-seryl-[protein] + ADP + H(+). The enzyme catalyses L-threonyl-[protein] + ATP = O-phospho-L-threonyl-[protein] + ADP + H(+). In terms of biological role, has a role in pre-mRNA splicing and is essential for growth. Phosphorylates srp1. This Schizosaccharomyces pombe (strain 972 / ATCC 24843) (Fission yeast) protein is Serine/threonine-protein kinase prp4 (prp4).